Here is a 204-residue protein sequence, read N- to C-terminus: Transcriptional regulator GfcR (204 aa).

Belongs to the purine/pyrimidine phosphoribosyltransferase family. GfcR subfamily.

This Methanosarcina mazei (strain ATCC BAA-159 / DSM 3647 / Goe1 / Go1 / JCM 11833 / OCM 88) (Methanosarcina frisia) protein is Transcriptional regulator GfcR.